The primary structure comprises 396 residues: Acetate kinase (396 aa).

Asn-7 contacts Mg(2+). Residue Lys-14 coordinates ATP. Arg-88 is a binding site for substrate. Asp-145 acts as the Proton donor/acceptor in catalysis. ATP is bound by residues 205–209, 279–281, and 327–331; these read HLGNG, DFR, and GIGEN. Glu-381 lines the Mg(2+) pocket.

Belongs to the acetokinase family. As to quaternary structure, homodimer. Requires Mg(2+) as cofactor. Mn(2+) is required as a cofactor.

Its subcellular location is the cytoplasm. The enzyme catalyses acetate + ATP = acetyl phosphate + ADP. Its pathway is metabolic intermediate biosynthesis; acetyl-CoA biosynthesis; acetyl-CoA from acetate: step 1/2. In terms of biological role, catalyzes the formation of acetyl phosphate from acetate and ATP. Can also catalyze the reverse reaction. In Campylobacter jejuni (strain RM1221), this protein is Acetate kinase.